Reading from the N-terminus, the 333-residue chain is Protoheme IX farnesyltransferase (333 aa).

The next 7 membrane-spanning stretches (helical) occupy residues 64-84, 110-130, 133-153, 161-181, 189-209, 246-266, and 287-307; these read LICTLGGGALAAAAAGALNCL, TVFLAAVSCTLAASMLLVSGV, LAAGLTLLGLFSYVILYTVIL, IVFGGVAGAIPPLVGASAATG, WLFGLVMLWTPAHFWALAILL, IMGVFALPEGGLLYGIMLLPF, and AKSLFRWSILYMFGICLLLLI.

The protein belongs to the UbiA prenyltransferase family. Protoheme IX farnesyltransferase subfamily.

It is found in the cell inner membrane. The enzyme catalyses heme b + (2E,6E)-farnesyl diphosphate + H2O = Fe(II)-heme o + diphosphate. Its pathway is porphyrin-containing compound metabolism; heme O biosynthesis; heme O from protoheme: step 1/1. Its function is as follows. Converts heme B (protoheme IX) to heme O by substitution of the vinyl group on carbon 2 of heme B porphyrin ring with a hydroxyethyl farnesyl side group. This Prochlorococcus marinus (strain MIT 9215) protein is Protoheme IX farnesyltransferase.